Consider the following 387-residue polypeptide: Putative acid--amine ligase YjfC (387 aa).

101–103 (RMD) provides a ligand contact to ATP. Mg(2+) contacts are provided by aspartate 103, glutamate 116, and asparagine 118. Residues lysine 265, lysine 302, glycine 309, glutamine 337, and 372-374 (LIT) contribute to the ATP site.

This sequence belongs to the glutathionylspermidine synthase preATP-grasp family.

May be a ligase forming an amide bond. Shows ATPase activity. Despite its similarity to the C-terminal synthetase domain of Gss, is not a glutathionylspermidine (Gsp) synthetase. Cannot synthesize Gsp, glutathione (GSH), or GSH intermediates, from GSH and spermidine, cysteine and glutamate, gamma-glutamylcysteine and spermidine, and gamma-glutamylcysteine and glycine. Does not bind to Gsp. In Escherichia coli (strain K12), this protein is Putative acid--amine ligase YjfC (yjfC).